The sequence spans 172 residues: Ribosome maturation factor RimM (172 aa).

The PRC barrel domain occupies 96 to 168 (DGEFYYHEII…RVDVEILEGL (73 aa)).

This sequence belongs to the RimM family. Binds ribosomal protein uS19.

It localises to the cytoplasm. In terms of biological role, an accessory protein needed during the final step in the assembly of 30S ribosomal subunit, possibly for assembly of the head region. Essential for efficient processing of 16S rRNA. May be needed both before and after RbfA during the maturation of 16S rRNA. It has affinity for free ribosomal 30S subunits but not for 70S ribosomes. The sequence is that of Ribosome maturation factor RimM from Streptococcus pneumoniae serotype 4 (strain ATCC BAA-334 / TIGR4).